The following is a 408-amino-acid chain: tRNA-specific 2-thiouridylase MnmA (408 aa).

ATP is bound by residues 38–45 and Met-64; that span reads GMSGGVDS. The segment at 124-126 is interaction with target base in tRNA; the sequence is NPD. Cys-129 serves as the catalytic Nucleophile. A disulfide bridge connects residues Cys-129 and Cys-231. An ATP-binding site is contributed by Gly-153. An interaction with tRNA region spans residues 181-183; it reads KDQ. Cys-231 functions as the Cysteine persulfide intermediate in the catalytic mechanism. The tract at residues 348-349 is interaction with tRNA; sequence RY.

It belongs to the MnmA/TRMU family.

The protein resides in the cytoplasm. It catalyses the reaction S-sulfanyl-L-cysteinyl-[protein] + uridine(34) in tRNA + AH2 + ATP = 2-thiouridine(34) in tRNA + L-cysteinyl-[protein] + A + AMP + diphosphate + H(+). Its function is as follows. Catalyzes the 2-thiolation of uridine at the wobble position (U34) of tRNA, leading to the formation of s(2)U34. In Psychrobacter cryohalolentis (strain ATCC BAA-1226 / DSM 17306 / VKM B-2378 / K5), this protein is tRNA-specific 2-thiouridylase MnmA.